We begin with the raw amino-acid sequence, 443 residues long: Phosphoglucosamine mutase (443 aa).

Ser-101 functions as the Phosphoserine intermediate in the catalytic mechanism. 4 residues coordinate Mg(2+): Ser-101, Asp-239, Asp-241, and Asp-243. At Ser-101 the chain carries Phosphoserine.

The protein belongs to the phosphohexose mutase family. The cofactor is Mg(2+). Post-translationally, activated by phosphorylation.

The enzyme catalyses alpha-D-glucosamine 1-phosphate = D-glucosamine 6-phosphate. Functionally, catalyzes the conversion of glucosamine-6-phosphate to glucosamine-1-phosphate. The protein is Phosphoglucosamine mutase of Francisella tularensis subsp. tularensis (strain WY96-3418).